A 103-amino-acid chain; its full sequence is Toluene-4-monooxygenase system, effector component (103 aa).

This sequence belongs to the TmoD/XamoD family. The alkene monooxygenase multicomponent enzyme system is composed of an electron transfer component and a monooxygenase component interacting with the effector protein TmoD. The electron transfer component is composed of a ferredoxin reductase (TmoF) and a ferredoxin (TmoC), and the monooxygenase component is formed by a heterohexamer (dimer of heterotrimers) of two alpha subunits (TmoA), two beta subunits (TmoE) and two gamma subunits (TmoB).

It participates in xenobiotic degradation; toluene degradation. Functionally, effector component of the toluene-4-monooxygenase multicomponent enzyme system which catalyzes the O2- and NADH-dependent hydroxylation of toluene to form p-cresol. Required for optimal efficiency and specificity of the holoenzyme. This Ectopseudomonas mendocina (Pseudomonas mendocina) protein is Toluene-4-monooxygenase system, effector component.